Reading from the N-terminus, the 387-residue chain is 3-ketoacyl-CoA thiolase (387 aa).

The active-site Acyl-thioester intermediate is C91. Active-site proton acceptor residues include H343 and C373.

The protein belongs to the thiolase-like superfamily. Thiolase family. In terms of assembly, heterotetramer of two alpha chains (FadB) and two beta chains (FadA).

The protein localises to the cytoplasm. It carries out the reaction an acyl-CoA + acetyl-CoA = a 3-oxoacyl-CoA + CoA. It participates in lipid metabolism; fatty acid beta-oxidation. Functionally, catalyzes the final step of fatty acid oxidation in which acetyl-CoA is released and the CoA ester of a fatty acid two carbons shorter is formed. The protein is 3-ketoacyl-CoA thiolase of Vibrio cholerae serotype O1 (strain ATCC 39541 / Classical Ogawa 395 / O395).